The chain runs to 92 residues: Small ribosomal subunit protein uS17 (92 aa).

It belongs to the universal ribosomal protein uS17 family. In terms of assembly, part of the 30S ribosomal subunit.

Functionally, one of the primary rRNA binding proteins, it binds specifically to the 5'-end of 16S ribosomal RNA. The protein is Small ribosomal subunit protein uS17 of Wigglesworthia glossinidia brevipalpis.